We begin with the raw amino-acid sequence, 328 residues long: GATA transcription factor 17 (328 aa).

A disordered region spans residues 1 to 68 (MSGHHEAKPY…EEYEGGEGVP (68 aa)). Residues 14-29 (RGPAPADEEAAPAAAA) are compositionally biased toward low complexity. 2 stretches are compositionally biased toward acidic residues: residues 30–39 (DEAEAEAEVE) and 47–63 (EQEY…EYEG). The Tify domain maps to 100 to 135 (PHVASNTLTLSFQGEVYVFESVSAERVQAVLLLLGG). Residues 161–203 (RMASLMRFREKRKERNFDKKIRYTVRKEVALRMQRNRGQFTSS) enclose the CCT domain. Residues 198–231 (GQFTSSKSKAEEATSVITSSEGSPNWGAVEGRPP) form a disordered region. The segment at 236 to 263 (CHHCGISAASTPMMRRGPDGPRTLCNAC) adopts a GATA-type zinc-finger fold.

It belongs to the type IV zinc-finger family. Class C subfamily.

The protein resides in the nucleus. In terms of biological role, transcriptional activator that specifically binds 5'-GATA-3' or 5'-GAT-3' motifs within gene promoters. The polypeptide is GATA transcription factor 17 (Oryza sativa subsp. japonica (Rice)).